Consider the following 234-residue polypeptide: Leucyl/phenylalanyl-tRNA--protein transferase (234 aa).

The protein belongs to the L/F-transferase family.

It localises to the cytoplasm. It catalyses the reaction N-terminal L-lysyl-[protein] + L-leucyl-tRNA(Leu) = N-terminal L-leucyl-L-lysyl-[protein] + tRNA(Leu) + H(+). The enzyme catalyses N-terminal L-arginyl-[protein] + L-leucyl-tRNA(Leu) = N-terminal L-leucyl-L-arginyl-[protein] + tRNA(Leu) + H(+). It carries out the reaction L-phenylalanyl-tRNA(Phe) + an N-terminal L-alpha-aminoacyl-[protein] = an N-terminal L-phenylalanyl-L-alpha-aminoacyl-[protein] + tRNA(Phe). In terms of biological role, functions in the N-end rule pathway of protein degradation where it conjugates Leu, Phe and, less efficiently, Met from aminoacyl-tRNAs to the N-termini of proteins containing an N-terminal arginine or lysine. The sequence is that of Leucyl/phenylalanyl-tRNA--protein transferase from Escherichia fergusonii (strain ATCC 35469 / DSM 13698 / CCUG 18766 / IAM 14443 / JCM 21226 / LMG 7866 / NBRC 102419 / NCTC 12128 / CDC 0568-73).